We begin with the raw amino-acid sequence, 491 residues long: Inositol-pentakisphosphate 2-kinase (491 aa).

The EXKPK motif signature appears at 136–140 (EIKPK). A Phosphoserine modification is found at Ser-282.

The protein belongs to the IPK1 type 2 family. In terms of tissue distribution, ubiquitously expressed, with high expression in heart, brain, testis and placenta.

It is found in the cytoplasm. The protein localises to the nucleus. The enzyme catalyses 1D-myo-inositol 1,3,4,5,6-pentakisphosphate + ATP = 1D-myo-inositol hexakisphosphate + ADP + H(+). Phosphorylates Ins(1,3,4,5,6)P5 at position 2 to form Ins(1,2,3,4,5,6)P6 (InsP6 or phytate). InsP6 is involved in many processes such as mRNA export, non-homologous end-joining, endocytosis, ion channel regulation. It also protects cells from TNF-alpha-induced apoptosis. In Homo sapiens (Human), this protein is Inositol-pentakisphosphate 2-kinase (IPPK).